Reading from the N-terminus, the 861-residue chain is Seed linoleate 9S-lipoxygenase-3 (861 aa).

In terms of domain architecture, PLAT spans 41–166 (QGFDILGSTV…HHKIDRIFFA (126 aa)). Residues 169–861 (TYLPSETPAP…FRGIPNSISI (693 aa)) enclose the Lipoxygenase domain. The interval 215 to 257 (NPDSGENHARPVLGGSETYPYPRRGRTGRKPTRKDPNSESRSD) is disordered. Basic residues predominate over residues 237-246 (RRGRTGRKPT). Residues 247–257 (RKDPNSESRSD) are compositionally biased toward basic and acidic residues. 5 residues coordinate Fe cation: His522, His527, His713, Asn717, and Ile861.

The protein belongs to the lipoxygenase family. Fe cation is required as a cofactor.

The protein localises to the cytoplasm. The enzyme catalyses (9Z,12Z)-octadecadienoate + O2 = (9S)-hydroperoxy-(10E,12Z)-octadecadienoate. It functions in the pathway lipid metabolism; oxylipin biosynthesis. Functionally, plant lipoxygenase may be involved in a number of diverse aspects of plant physiology including growth and development, pest resistance, and senescence or responses to wounding. It catalyzes the hydroperoxidation of lipids containing a cis,cis-1,4-pentadiene structure. This is Seed linoleate 9S-lipoxygenase-3 (LOX1.3) from Pisum sativum (Garden pea).